The following is a 95-amino-acid chain: Pyrimidine/purine nucleoside phosphorylase (95 aa).

It belongs to the nucleoside phosphorylase PpnP family.

It catalyses the reaction a purine D-ribonucleoside + phosphate = a purine nucleobase + alpha-D-ribose 1-phosphate. It carries out the reaction adenosine + phosphate = alpha-D-ribose 1-phosphate + adenine. The enzyme catalyses cytidine + phosphate = cytosine + alpha-D-ribose 1-phosphate. The catalysed reaction is guanosine + phosphate = alpha-D-ribose 1-phosphate + guanine. It catalyses the reaction inosine + phosphate = alpha-D-ribose 1-phosphate + hypoxanthine. It carries out the reaction thymidine + phosphate = 2-deoxy-alpha-D-ribose 1-phosphate + thymine. The enzyme catalyses uridine + phosphate = alpha-D-ribose 1-phosphate + uracil. The catalysed reaction is xanthosine + phosphate = alpha-D-ribose 1-phosphate + xanthine. Functionally, catalyzes the phosphorolysis of diverse nucleosides, yielding D-ribose 1-phosphate and the respective free bases. Can use uridine, adenosine, guanosine, cytidine, thymidine, inosine and xanthosine as substrates. Also catalyzes the reverse reactions. In Yersinia enterocolitica serotype O:8 / biotype 1B (strain NCTC 13174 / 8081), this protein is Pyrimidine/purine nucleoside phosphorylase.